A 228-amino-acid polypeptide reads, in one-letter code: Growth arrest-specific protein 1 homolog (228 aa).

An N-terminal signal peptide occupies residues 1-17; the sequence is MRRVILPLVMTVTLCLA. Residues N143 and N156 are each glycosylated (N-linked (GlcNAc...) asparagine). D205 carries GPI-anchor amidated aspartate lipidation. Positions 206-228 are cleaved as a propeptide — removed in mature form; it reads SSVGHGFNILSAISVYLLTVLVF.

In terms of tissue distribution, pharynx muscle cells from its early formation, in the two-fold embryo, until the adult stage.

It is found in the cell membrane. In terms of biological role, role in pharynx function or development. The sequence is that of Growth arrest-specific protein 1 homolog (phg-1) from Caenorhabditis elegans.